The chain runs to 285 residues: 4-hydroxybenzoate octaprenyltransferase (285 aa).

The next 8 membrane-spanning stretches (helical) occupy residues leucine 28–phenylalanine 48, isoleucine 86–isoleucine 106, asparagine 110–phenylalanine 130, phenylalanine 133–phenylalanine 153, valine 160–threonine 180, valine 207–methionine 227, tryptophan 232–isoleucine 252, and alanine 262–isoleucine 284.

This sequence belongs to the UbiA prenyltransferase family. Mg(2+) serves as cofactor.

It is found in the cell inner membrane. The catalysed reaction is all-trans-octaprenyl diphosphate + 4-hydroxybenzoate = 4-hydroxy-3-(all-trans-octaprenyl)benzoate + diphosphate. Its pathway is cofactor biosynthesis; ubiquinone biosynthesis. In terms of biological role, catalyzes the prenylation of para-hydroxybenzoate (PHB) with an all-trans polyprenyl group. Mediates the second step in the final reaction sequence of ubiquinone-8 (UQ-8) biosynthesis, which is the condensation of the polyisoprenoid side chain with PHB, generating the first membrane-bound Q intermediate 3-octaprenyl-4-hydroxybenzoate. The chain is 4-hydroxybenzoate octaprenyltransferase from Cupriavidus pinatubonensis (strain JMP 134 / LMG 1197) (Cupriavidus necator (strain JMP 134)).